Consider the following 105-residue polypeptide: Unclassified hydrophobin D (105 aa).

The first 18 residues, 1–18, serve as a signal peptide directing secretion; the sequence is MKFYIVLLALAAFAMAEA. Cystine bridges form between Cys-35/Cys-86, Cys-42/Cys-83, and Cys-43/Cys-49.

It is found in the secreted. Its subcellular location is the cell wall. Functionally, aerial growth, conidiation, and dispersal of filamentous fungi in the environment rely upon a capability of their secreting small amphipathic proteins called hydrophobins (HPBs) with low sequence identity. Class I can self-assemble into an outermost layer of rodlet bundles on aerial cell surfaces, conferring cellular hydrophobicity that supports fungal growth, development and dispersal; whereas Class II form highly ordered films at water-air interfaces through intermolecular interactions but contribute nothing to the rodlet structure. In P.expansum, hydrophobins contribute to germination, tolerance to cold stress and mycotoxins patulin and citrinin production. This Penicillium expansum (Blue mold rot fungus) protein is Unclassified hydrophobin D.